Consider the following 352-residue polypeptide: Cyclin-O (352 aa).

A disordered region spans residues methionine 1–lysine 40. Over residues proline 28–lysine 40 the composition is skewed to basic residues. Residue serine 83 is modified to Phosphoserine.

The protein belongs to the cyclin family. Present in respiratory cells (at protein level). Expressed in multiciliated tissue in brain and fallopian tube (at protein level). Highly expressed in oocytes.

It is found in the cytoplasm. Its subcellular location is the nucleus. The protein localises to the nucleolus. Specifically required for generation of multiciliated cells, possibly by promoting a cell cycle state compatible with centriole amplification and maturation. Acts downstream of MCIDAS to promote mother centriole amplification and maturation in preparation for apical docking. May be involved in apoptosis in lymphoid cells; however, this result requires additional evidences in vivo. May be involved in oocyte meiotic resumption in oocytes. This is Cyclin-O from Mus musculus (Mouse).